Here is a 345-residue protein sequence, read N- to C-terminus: Selenide, water dikinase (345 aa).

The active site involves Cys-16. ATP is bound by residues Lys-19 and 46–48; that span reads TSD. Asp-49 contacts Mg(2+). Residues Asp-66, Asp-89, and 136–138 contribute to the ATP site; that span reads GHT. Mg(2+) is bound at residue Asp-89. Residue Asp-224 participates in Mg(2+) binding.

Belongs to the selenophosphate synthase 1 family. Class I subfamily. As to quaternary structure, homodimer. Mg(2+) is required as a cofactor.

The catalysed reaction is hydrogenselenide + ATP + H2O = selenophosphate + AMP + phosphate + 2 H(+). Synthesizes selenophosphate from selenide and ATP. The protein is Selenide, water dikinase of Clostridium botulinum (strain Eklund 17B / Type B).